Reading from the N-terminus, the 188-residue chain is GMP synthase [glutamine-hydrolyzing] subunit A (188 aa).

The region spanning 1–188 is the Glutamine amidotransferase type-1 domain; that stretch reads MIVILNNGGQ…FCKVCGLLGE (188 aa). The active-site Nucleophile is C76. Active-site residues include H163 and E165.

In terms of assembly, heterodimer composed of a glutamine amidotransferase subunit (A) and a GMP-binding subunit (B).

It carries out the reaction XMP + L-glutamine + ATP + H2O = GMP + L-glutamate + AMP + diphosphate + 2 H(+). Its pathway is purine metabolism; GMP biosynthesis; GMP from XMP (L-Gln route): step 1/1. Functionally, catalyzes the synthesis of GMP from XMP. The protein is GMP synthase [glutamine-hydrolyzing] subunit A of Methanococcus aeolicus (strain ATCC BAA-1280 / DSM 17508 / OCM 812 / Nankai-3).